A 332-amino-acid chain; its full sequence is Glucokinase (332 aa).

Position 15–20 (15–20 (ADIGGT)) interacts with ATP.

Belongs to the bacterial glucokinase family.

It localises to the cytoplasm. The catalysed reaction is D-glucose + ATP = D-glucose 6-phosphate + ADP + H(+). The polypeptide is Glucokinase (Campylobacter jejuni subsp. doylei (strain ATCC BAA-1458 / RM4099 / 269.97)).